We begin with the raw amino-acid sequence, 367 residues long: Glutamate 5-kinase (367 aa).

Lys9 serves as a coordination point for ATP. Substrate-binding residues include Ser49, Asp136, and Asn148. ATP-binding positions include 168–169 and 210–216; these read TD and TGGMKSK. A PUA domain is found at 276–350; that stretch reads SGQIEVDAGA…GMQSQDIQVR (75 aa).

The protein belongs to the glutamate 5-kinase family.

The protein resides in the cytoplasm. The catalysed reaction is L-glutamate + ATP = L-glutamyl 5-phosphate + ADP. Its pathway is amino-acid biosynthesis; L-proline biosynthesis; L-glutamate 5-semialdehyde from L-glutamate: step 1/2. Catalyzes the transfer of a phosphate group to glutamate to form L-glutamate 5-phosphate. This is Glutamate 5-kinase from Bacillus cereus (strain G9842).